The chain runs to 189 residues: T cell receptor gamma constant 2 (189 aa).

One can recognise an Ig-like domain in the interval 10–104; it reads PKPTIFLPSI…NKNGIDQEII (95 aa). Cysteine 32 and cysteine 88 are joined by a disulfide. Residues asparagine 66, asparagine 120, asparagine 136, asparagine 142, and asparagine 151 are each glycosylated (N-linked (GlcNAc...) asparagine). A helical membrane pass occupies residues 155–177; that stretch reads YYTYLLLLLKSVVYFAIITCCLL.

Gamma-delta TR is a heterodimer composed of a gamma and delta chain; disulfide-linked. The gamma-delta TR is associated with the transmembrane signaling CD3 coreceptor proteins following the stoichiometry: a single gamma-delta TR heterodimer associates with one CD3D-CD3E heterodimer, one CD3G-CD3E heterodimer and one CD247 homodimer forming a stable octameric structure. Upon activation, gamma-delta TR complex associates with FCER1G to initiate intracellular signaling.

The protein localises to the cell membrane. Constant region of T cell receptor (TR) gamma chain that participates in the antigen recognition. Gamma-delta TRs recognize a variety of self and foreign non-peptide antigens frequently expressed at the epithelial boundaries between the host and external environment, including endogenous lipids presented by MH-like protein CD1D and phosphoantigens presented by butyrophilin-like molecule BTN3A1. Upon antigen recognition induces rapid, innate-like immune responses involved in pathogen clearance and tissue repair. Binding of gamma-delta TR complex to antigen triggers phosphorylation of immunoreceptor tyrosine-based activation motifs (ITAMs) in the CD3 chains by the LCK and FYN kinases, allowing the recruitment, phosphorylation, and activation of ZAP70 that facilitates phosphorylation of the scaffolding proteins LCP2 and LAT. This lead to the formation of a supramolecular signalosome that recruits the phospholipase PLCG1, resulting in calcium mobilization and ERK activation, ultimately leading to T cell expansion and differentiation into effector cells. Gamma-delta TRs are produced through somatic rearrangement of a limited repertoire of variable (V), diversity (D), and joining (J) genes. The potential diversity of gamma-delta TRs is conferred by the unique ability to rearrange (D) genes in tandem and to utilize all three reading frames. The combinatorial diversity is considerably increased by the sequence exonuclease trimming and random nucleotide (N) region additions which occur during the V-(D)-J rearrangements. The chain is T cell receptor gamma constant 2 from Homo sapiens (Human).